The following is a 104-amino-acid chain: Large ribosomal subunit protein uL23 (104 aa).

Belongs to the universal ribosomal protein uL23 family. In terms of assembly, part of the 50S ribosomal subunit. Contacts protein L29, and trigger factor when it is bound to the ribosome.

In terms of biological role, one of the early assembly proteins it binds 23S rRNA. One of the proteins that surrounds the polypeptide exit tunnel on the outside of the ribosome. Forms the main docking site for trigger factor binding to the ribosome. This is Large ribosomal subunit protein uL23 from Nostoc punctiforme (strain ATCC 29133 / PCC 73102).